The primary structure comprises 366 residues: DNA primase large subunit PriL (366 aa).

Positions 227, 298, 307, and 314 each coordinate [4Fe-4S] cluster.

Belongs to the eukaryotic-type primase large subunit family. Heterodimer of a small subunit (PriS) and a large subunit (PriL). Requires [4Fe-4S] cluster as cofactor.

Regulatory subunit of DNA primase, an RNA polymerase that catalyzes the synthesis of short RNA molecules used as primers for DNA polymerase during DNA replication. Stabilizes and modulates the activity of the small subunit, increasing the rate of DNA synthesis, and conferring RNA synthesis capability. The DNA polymerase activity may enable DNA primase to also catalyze primer extension after primer synthesis. May also play a role in DNA repair. The protein is DNA primase large subunit PriL of Methanocella arvoryzae (strain DSM 22066 / NBRC 105507 / MRE50).